The chain runs to 527 residues: N-acetylglutamate synthase, mitochondrial (527 aa).

Residues 1-39 (MAKVNSGSSGCRAMVMAGQFWTKPFALSSQRSGPHRRSA) constitute a mitochondrion transit peptide. Residues 28–65 (SSQRSGPHRRSAAEVNRRMSSSRTAGHGSKTPLWSQQE) form a disordered region. Residues 40–83 (AEVNRRMSSSRTAGHGSKTPLWSQQESYNHSSLGERSAWSNRTL) form a may stabilize the oligomeric structure region. The tract at residues 40 to 361 (AEVNRRMSSS…SGTLFKNGDP (322 aa)) is amino-acid kinase domain (AAK). In terms of domain architecture, N-acetyltransferase spans 360–511 (DPIRRYSSLE…FAKSHPDSFC (152 aa)). Substrate-binding positions include Lys-386, Lys-429, and 459–464 (RSRTTN).

It belongs to the acetyltransferase family. In terms of assembly, homodimer. Homotetramer.

Its subcellular location is the mitochondrion matrix. The catalysed reaction is L-glutamate + acetyl-CoA = N-acetyl-L-glutamate + CoA + H(+). With respect to regulation, inhibited by L-arginine. In terms of biological role, plays a role in the regulation of ureagenesis by producing the essential cofactor N-acetylglutamate (NAG), thus modulating carbamoylphosphate synthase I (cps1) activity. The polypeptide is N-acetylglutamate synthase, mitochondrial (Danio rerio (Zebrafish)).